A 916-amino-acid chain; its full sequence is Protein translocase subunit SecA (916 aa).

ATP is bound by residues glutamine 87, 105–109, and aspartate 507; that span reads GEGKT. The Zn(2+) site is built by cysteine 900, cysteine 902, cysteine 911, and histidine 912.

It belongs to the SecA family. As to quaternary structure, monomer and homodimer. Part of the essential Sec protein translocation apparatus which comprises SecA, SecYEG and auxiliary proteins SecDF-YajC and YidC. Zn(2+) is required as a cofactor.

It localises to the cell inner membrane. The protein localises to the cytoplasm. It carries out the reaction ATP + H2O + cellular proteinSide 1 = ADP + phosphate + cellular proteinSide 2.. In terms of biological role, part of the Sec protein translocase complex. Interacts with the SecYEG preprotein conducting channel. Has a central role in coupling the hydrolysis of ATP to the transfer of proteins into and across the cell membrane, serving both as a receptor for the preprotein-SecB complex and as an ATP-driven molecular motor driving the stepwise translocation of polypeptide chains across the membrane. The protein is Protein translocase subunit SecA of Neisseria meningitidis serogroup C / serotype 2a (strain ATCC 700532 / DSM 15464 / FAM18).